A 456-amino-acid chain; its full sequence is Solute carrier family 49 member 4 homolog (456 aa).

Over Met1–Arg29 the chain is Cytoplasmic. The Di-leucine motif; mediates lysosomal localization motif lies at Leu14–Leu15. The helical transmembrane segment at Trp30–Trp50 threads the bilayer. The Lumenal segment spans residues Gly51 to Asp67. Residues Ile68–Leu88 traverse the membrane as a helical segment. Residues Met89–Arg95 are Cytoplasmic-facing. The chain crosses the membrane as a helical span at residues Ile96 to Val116. The Lumenal portion of the chain corresponds to Glu117–Arg123. Residues Ile124–Ala144 traverse the membrane as a helical segment. Over Pro145–Ala162 the chain is Cytoplasmic. A helical transmembrane segment spans residues Ile163–Val183. The Lumenal portion of the chain corresponds to Pro184 to Glu207. An N-linked (GlcNAc...) asparagine glycan is attached at Asn187. The helical transmembrane segment at Ala208–Phe228 threads the bilayer. The Cytoplasmic segment spans residues Pro229 to Arg259. A helical membrane pass occupies residues Phe260–Val280. Over Leu281–Gln292 the chain is Lumenal. A helical transmembrane segment spans residues Val293–Val313. The Cytoplasmic segment spans residues Gly314–Pro326. Residues Ile327–Leu347 form a helical membrane-spanning segment. The Lumenal segment spans residues Ser348–Thr362. A glycan (N-linked (GlcNAc...) asparagine) is linked at Asn349. A helical transmembrane segment spans residues Ser363–Val383. At Glu384 to Gly392 the chain is on the cytoplasmic side. Residues Ile393–Leu413 traverse the membrane as a helical segment. The Lumenal portion of the chain corresponds to Thr414 to Leu420. Residues Ser421–Phe441 form a helical membrane-spanning segment. The Cytoplasmic portion of the chain corresponds to Arg442–Val456.

Belongs to the major facilitator superfamily.

The protein localises to the lysosome membrane. It catalyses the reaction pyridoxine(out) + n H(+)(out) = pyridoxine(in) + n H(+)(in). Its function is as follows. Mediates H(+)-dependent pyridoxine transport. This Xenopus laevis (African clawed frog) protein is Solute carrier family 49 member 4 homolog (slc49a4).